The primary structure comprises 78 residues: Beta-defensin 105A (78 aa).

An N-terminal signal peptide occupies residues 1–27; the sequence is MALIRKTFYFLFAVFFILVQLPSGCQA. 3 disulfides stabilise this stretch: C46/C74, C53/C67, and C57/C73.

This sequence belongs to the beta-defensin family.

It is found in the secreted. Has antimicrobial activity. This chain is Beta-defensin 105A (DEFB105A), found in Hylobates lar (Lar gibbon).